The following is a 128-amino-acid chain: RxLR effector protein SFI2 (128 aa).

The N-terminal stretch at 1-22 (MRSAFYIFLVVAVLARCSVVAA) is a signal peptide. A RxLR-dEER motif is present at residues 52–71 (RLLRVAGREDDDATTDEEDR).

It belongs to the RxLR effector family.

It localises to the secreted. Its subcellular location is the host nucleus. Functionally, effector that suppresses flg22-induced post-translational MAP kinase activation both tomato and Arabidopsis. The perception of highly conserved pathogen- or microbe-associated molecular patterns (PAMPs/MAMPs), such as flg22, triggers converging signaling pathways recruiting MAP kinase cascades and inducing transcriptional re-programming, yielding a generic antimicrobial response. This chain is RxLR effector protein SFI2, found in Phytophthora infestans (strain T30-4) (Potato late blight agent).